A 446-amino-acid polypeptide reads, in one-letter code: Nuclear distribution protein nudF (446 aa).

One can recognise a LisH domain in the interval 9–41; that stretch reads QAEELHKSMVAYLSSIKASQSSNTLREELGIGD. The stretch at 60-86 forms a coiled coil; that stretch reads TGIARLQRKILDLESKITSLQAELDSV. WD repeat units lie at residues 113–154, 156–196, 200–240, 243–282, 285–345, 347–386, 391–430, and 432–446; these read SHRD…RTLK, HMRG…ANIR, GHDH…CVRT, SNSIWFLDVSPSFDGKWLVAGGRDQAVTVWEVSSAEPRAA, GHDN…IKTL, GHDNWIRGLVFHPSGKYLFSVSDDKTIRCWDLSQEGRLVK, AHGHFISCIRWAPPPRNAAAEASETTNGVSKKAPTKPAFQ, and VIATGSADSCVRVFK.

It belongs to the WD repeat LIS1/nudF family. Self-associates. Interacts with nudE and dynein.

It localises to the cytoplasm. It is found in the cytoskeleton. The protein localises to the spindle pole. Functionally, positively regulates the activity of the minus-end directed microtubule motor protein dynein. May enhance dynein-mediated microtubule sliding by targeting dynein to the microtubule plus end. Required for nuclear migration during vegetative growth as well as development. Required for retrograde early endosome (EE) transport from the hyphal tip. Required for localization of dynein to the mitotic spindle poles. Recruits additional proteins to the dynein complex at SPBs. The polypeptide is Nuclear distribution protein nudF (Aspergillus terreus (strain NIH 2624 / FGSC A1156)).